Consider the following 265-residue polypeptide: tRNA (guanine-N(1)-)-methyltransferase (265 aa).

Residues Gly-119 and Val-139 to Leu-144 each bind S-adenosyl-L-methionine.

Belongs to the RNA methyltransferase TrmD family. As to quaternary structure, homodimer.

The protein resides in the cytoplasm. It catalyses the reaction guanosine(37) in tRNA + S-adenosyl-L-methionine = N(1)-methylguanosine(37) in tRNA + S-adenosyl-L-homocysteine + H(+). Its function is as follows. Specifically methylates guanosine-37 in various tRNAs. This is tRNA (guanine-N(1)-)-methyltransferase from Pseudoalteromonas atlantica (strain T6c / ATCC BAA-1087).